We begin with the raw amino-acid sequence, 65 residues long: Large ribosomal subunit protein bL35 (65 aa).

This sequence belongs to the bacterial ribosomal protein bL35 family.

In Geobacter sp. (strain M21), this protein is Large ribosomal subunit protein bL35.